The chain runs to 436 residues: tRNA-2-methylthio-N(6)-dimethylallyladenosine synthase (436 aa).

One can recognise an MTTase N-terminal domain in the interval 5 to 121; that stretch reads RKLFIKTYGC…LPDMLDRTEG (117 aa). [4Fe-4S] cluster is bound by residues Cys-14, Cys-50, Cys-84, Cys-158, Cys-162, and Cys-165. Positions 144–374 constitute a Radical SAM core domain; it reads ATRGPAAFLT…TEQQRAAQMA (231 aa). Residues 373-435 enclose the TRAM domain; the sequence is MAMVGREVGV…PNSLAGERLG (63 aa).

The protein belongs to the methylthiotransferase family. MiaB subfamily. In terms of assembly, monomer. Requires [4Fe-4S] cluster as cofactor.

The protein resides in the cytoplasm. The catalysed reaction is N(6)-dimethylallyladenosine(37) in tRNA + (sulfur carrier)-SH + AH2 + 2 S-adenosyl-L-methionine = 2-methylsulfanyl-N(6)-dimethylallyladenosine(37) in tRNA + (sulfur carrier)-H + 5'-deoxyadenosine + L-methionine + A + S-adenosyl-L-homocysteine + 2 H(+). Functionally, catalyzes the methylthiolation of N6-(dimethylallyl)adenosine (i(6)A), leading to the formation of 2-methylthio-N6-(dimethylallyl)adenosine (ms(2)i(6)A) at position 37 in tRNAs that read codons beginning with uridine. The polypeptide is tRNA-2-methylthio-N(6)-dimethylallyladenosine synthase (Cereibacter sphaeroides (strain ATCC 17029 / ATH 2.4.9) (Rhodobacter sphaeroides)).